A 365-amino-acid polypeptide reads, in one-letter code: Phospho-N-acetylmuramoyl-pentapeptide-transferase (365 aa).

The next 10 helical transmembrane spans lie at 19-39 (TLLI…SSWA), 49-69 (LLIA…AVVP), 92-112 (AGTP…IAVV), 116-136 (FNPD…IGWV), 156-176 (LFLQ…YGPT), 183-203 (IMQF…FALV), 215-235 (VDGL…LLVA), 238-258 (NPAL…FVHH), 279-299 (LAAV…SGIF), and 345-365 (QIVG…MATA).

It belongs to the glycosyltransferase 4 family. MraY subfamily. Mg(2+) serves as cofactor.

It localises to the cell inner membrane. The enzyme catalyses UDP-N-acetyl-alpha-D-muramoyl-L-alanyl-gamma-D-glutamyl-meso-2,6-diaminopimeloyl-D-alanyl-D-alanine + di-trans,octa-cis-undecaprenyl phosphate = di-trans,octa-cis-undecaprenyl diphospho-N-acetyl-alpha-D-muramoyl-L-alanyl-D-glutamyl-meso-2,6-diaminopimeloyl-D-alanyl-D-alanine + UMP. Its pathway is cell wall biogenesis; peptidoglycan biosynthesis. In terms of biological role, catalyzes the initial step of the lipid cycle reactions in the biosynthesis of the cell wall peptidoglycan: transfers peptidoglycan precursor phospho-MurNAc-pentapeptide from UDP-MurNAc-pentapeptide onto the lipid carrier undecaprenyl phosphate, yielding undecaprenyl-pyrophosphoryl-MurNAc-pentapeptide, known as lipid I. The polypeptide is Phospho-N-acetylmuramoyl-pentapeptide-transferase (Synechocystis sp. (strain ATCC 27184 / PCC 6803 / Kazusa)).